A 715-amino-acid chain; its full sequence is DNA-directed RNA polymerase subunit beta' (715 aa).

Zn(2+)-binding residues include C69, C71, C87, and C90. Residues 244 to 272 (APESQSEVIEAQGPVPQAEEEKQRDQSIQ) form a disordered region. Mg(2+)-binding residues include D520, D522, and D524.

The protein belongs to the RNA polymerase beta' chain family. RpoC1 subfamily. In terms of assembly, in plastids the minimal PEP RNA polymerase catalytic core is composed of four subunits: alpha, beta, beta', and beta''. When a (nuclear-encoded) sigma factor is associated with the core the holoenzyme is formed, which can initiate transcription. Mg(2+) serves as cofactor. It depends on Zn(2+) as a cofactor.

It localises to the plastid. The protein localises to the chloroplast. The enzyme catalyses RNA(n) + a ribonucleoside 5'-triphosphate = RNA(n+1) + diphosphate. Functionally, DNA-dependent RNA polymerase catalyzes the transcription of DNA into RNA using the four ribonucleoside triphosphates as substrates. In Zygnema circumcarinatum (Green alga), this protein is DNA-directed RNA polymerase subunit beta'.